The chain runs to 178 residues: ATP-dependent protease subunit HslV (178 aa).

Thr-7 is an active-site residue. Na(+) contacts are provided by Gly-162, Cys-165, and Thr-168.

The protein belongs to the peptidase T1B family. HslV subfamily. In terms of assembly, a double ring-shaped homohexamer of HslV is capped on each side by a ring-shaped HslU homohexamer. The assembly of the HslU/HslV complex is dependent on binding of ATP.

It localises to the cytoplasm. It catalyses the reaction ATP-dependent cleavage of peptide bonds with broad specificity.. With respect to regulation, allosterically activated by HslU binding. Protease subunit of a proteasome-like degradation complex believed to be a general protein degrading machinery. This Cupriavidus necator (strain ATCC 17699 / DSM 428 / KCTC 22496 / NCIMB 10442 / H16 / Stanier 337) (Ralstonia eutropha) protein is ATP-dependent protease subunit HslV.